We begin with the raw amino-acid sequence, 349 residues long: Isopentenyl-diphosphate delta-isomerase (349 aa).

5-6 provides a ligand contact to substrate; that stretch reads RK. FMN is bound by residues Ser-62, 63–65, Ser-93, and Asn-122; that span reads AIT. Substrate is bound at residue 93 to 95; the sequence is SQR. Gln-151 is a binding site for substrate. Glu-152 contributes to the Mg(2+) binding site. Residues Lys-183, Thr-213, 259 to 261, and 280 to 281 each bind FMN; these read GIR and AL.

It belongs to the IPP isomerase type 2 family. Homooctamer. Dimer of tetramers. FMN serves as cofactor. It depends on NADPH as a cofactor. The cofactor is Mg(2+).

It is found in the cytoplasm. It catalyses the reaction isopentenyl diphosphate = dimethylallyl diphosphate. Involved in the biosynthesis of isoprenoids. Catalyzes the 1,3-allylic rearrangement of the homoallylic substrate isopentenyl (IPP) to its allylic isomer, dimethylallyl diphosphate (DMAPP). This Methanothermobacter thermautotrophicus (strain ATCC 29096 / DSM 1053 / JCM 10044 / NBRC 100330 / Delta H) (Methanobacterium thermoautotrophicum) protein is Isopentenyl-diphosphate delta-isomerase.